The sequence spans 664 residues: Protein SIEVE ELEMENT OCCLUSION C (664 aa).

The polypeptide is Protein SIEVE ELEMENT OCCLUSION C (Arabidopsis thaliana (Mouse-ear cress)).